The following is a 404-amino-acid chain: MDPGGQDLLALDPGDQDLLGFLLEESGDLWAATEPDVKASLDLELSPSENSVQELSDWEVEDLLSSLLSPSVSRDVLGSSSSSILHDHNYSLPQEHVSIDLGECEMISCRGRRELTGLAGSTFPFADTESFEKEGFHVTPLPGEERAAEQEMSRLILTEEEKKLLEKEGLTLPSTLPLTKVEEQVLKRVRRKIRNKRAAQESRKKKKVYVVGLESRVLKYTAQNRELQNKVQRLEEQNLSLLDQLRKLQAMVIEIANKTSSGSTCVLVLVFSFCLLLVPAMYSSDARGSVPAEYVVLHRKLRALPSEDDHQPKPSALSSELPMDSTHQSLDSSEHMFLVSSNFSCVLYHAPQAEQPLHWPLWDLSSEMLFSDSNLLLQANLSESEGWQPNHSPSLVIFQGRYSG.

At 1–261 (MDPGGQDLLA…VIEIANKTSS (261 aa)) the chain is on the cytoplasmic side. Short sequence motifs (LXXLL motif) lie at residues 19-23 (LGFLL) and 64-68 (LSSLL). An HCFC1-binding-motif (HBM) motif is present at residues 87–90 (DHNY). A bZIP domain is found at 185–248 (VLKRVRRKIR…LSLLDQLRKL (64 aa)). Residues 187–225 (KRVRRKIRNKRAAQESRKKKKVYVVGLESRVLKYTAQNR) are basic motif. Positions 227 to 248 (LQNKVQRLEEQNLSLLDQLRKL) are leucine-zipper. Residues 262–282 (GSTCVLVLVFSFCLLLVPAMY) form a helical; Signal-anchor for type II membrane protein membrane-spanning segment. The Lumenal segment spans residues 283–404 (SSDARGSVPA…LVIFQGRYSG (122 aa)). Residues 305–327 (PSEDDHQPKPSALSSELPMDSTH) are disordered. Residues Asn342 and Asn380 are each glycosylated (N-linked (GlcNAc...) asparagine).

Belongs to the bZIP family. ATF subfamily. In terms of assembly, homodimer. Interacts with HCFC1; the interaction is required to stimulate CREB3 transcriptional activity. Interacts with CREBZF; the interaction occurs only in combination with HCFC1. Interacts (via central part and transmembrane region) with DCSTAMP (via C-terminus cytoplasmic domain). Interacts with OS9. Interacts (via leucine-zipper domain) with CREBRF (via leucine-zipper domain); the interaction occurs only after CREB3 activation and promotes CREB3 degradation. Interacts (via C-terminal domain) with CCR1. In terms of processing, first proteolytically cleaved by site-1 protease (S1P) that generates membrane-associated N-terminus and a luminal C-terminus forms. The membrane-associated N-terminus form is further proteolytically processed probably by the site-2 protease (S2P) through a regulated intramembrane proteolysis (RIP), releasing the transcriptional active processed cyclic AMP-responsive element-binding protein 3 form, which is transported to the nucleus. The proteolytic cleavage is strongly induced during dendritic cell (DC) maturation and inhibited by DCSTAMP. That form is rapidly degraded. N-glycosylated. Widely expressed.

It is found in the endoplasmic reticulum membrane. It localises to the golgi apparatus. The protein resides in the nucleus. The protein localises to the cytoplasm. Functionally, endoplasmic reticulum (ER)-bound sequence-specific transcription factor that directly binds DNA and activates transcription. Plays a role in the unfolded protein response (UPR), promoting cell survival versus ER stress-induced apoptotic cell death. Also involved in cell proliferation, migration and differentiation, tumor suppression and inflammatory gene expression. Acts as a positive regulator of LKN-1/CCL15-induced chemotaxis signaling of leukocyte cell migration. Associates with chromatin to the HERPUD1 promoter. Also induces transcriptional activation of chemokine receptors. Functions as a negative transcriptional regulator in ligand-induced transcriptional activation of the glucocorticoid receptor NR3C1 by recruiting and activating histone deacetylases (HDAC1, HDAC2 and HDAC6). Also decreases the acetylation level of histone H4. Does not promote the chemotactic activity of leukocyte cells. This is the transcriptionally active form that translocates to the nucleus and activates unfolded protein response (UPR) target genes during endoplasmic reticulum (ER) stress response. Binds the cAMP response element (CRE) (consensus: 5'-GTGACGT[AG][AG]-3') and C/EBP sequences present in many promoters to activate transcription of the genes. Binds to the unfolded protein response element (UPRE) consensus sequences sites. Binds DNA to the 5'-CCAC[GA]-3'half of ERSE II (5'-ATTGG-N-CCACG-3'). In Mus musculus (Mouse), this protein is Cyclic AMP-responsive element-binding protein 3 (Creb3).